A 152-amino-acid polypeptide reads, in one-letter code: MASQESLTEEQIAEFKEAFSLFDKDGDGSITTKELGTVMRSLGQNPTEAELQDMINEVDADGNGNIDFPEFLTMMARKMQDTDTEEEIREAFKVFDKDGNGYISAAELRHVMTSLGEKLTNEEVDEMIREADLDGDGQVNYDEFVKMMIVRN.

The residue at position 2 (Ala2) is an N-acetylalanine. EF-hand domains lie at 10–45 (EQIA…LGQN), 46–81 (PTEA…KMQD), 83–118 (DTEE…LGEK), and 119–152 (LTNE…IVRN). Ca(2+) is bound by residues Asp23, Asp25, Asp27, Ser29, Glu34, Asp59, Asp61, Asn63, Asn65, Glu70, Asp96, Asp98, Asn100, Tyr102, Glu107, Asp132, Asp134, Asp136, Gln138, and Glu143.

It belongs to the calmodulin family. As to quaternary structure, interacts with cmbB, numA/nucleomorphin, pgkA/phosphoglycerate kinase, and thyB/thymidine kinase in the presence of Ca(2+). Interacts with dwwA in the absence of Ca(2+). The N-terminus is blocked. In terms of processing, trimethylation of Lys-118 observed in other calmodulins is absent here.

It is found in the contractile vacuole. In terms of biological role, calmodulin mediates the control of a large number of enzymes, ion channels and other proteins by Ca(2+). Among the enzymes to be stimulated by the calmodulin-Ca(2+) complex are a number of protein kinases and phosphatases. In Dictyostelium discoideum (Social amoeba), this protein is Calmodulin (calA).